The chain runs to 313 residues: Olfactory receptor 10K1 (313 aa).

The Extracellular portion of the chain corresponds to 1 to 25 (MEQVNKTVVREFVVLGFSSLARLQQ). N-linked (GlcNAc...) asparagine glycosylation is present at asparagine 5. Residues 26–46 (LLFVIFLLLYLFTLGTNAIII) traverse the membrane as a helical segment. Residues 47–54 (STIVLDRA) are Cytoplasmic-facing. A helical membrane pass occupies residues 55–75 (LHTPMYFFLAILSCSEICYTF). The Extracellular segment spans residues 76 to 99 (VIVPKMLVDLLSQKKTISFLGCAI). A helical transmembrane segment spans residues 100-120 (QMFSFLFFGSSHSFLLAAMGY). Topologically, residues 121–139 (DRYMAICNPLRYSVLMGHG) are cytoplasmic. The chain crosses the membrane as a helical span at residues 140–160 (VCMGLMAAACACGFTVSLVTT). The Extracellular portion of the chain corresponds to 161–197 (SLVFHLPFHSSNQLHHFFCDISPVLKLASQHSGFSQL). A helical membrane pass occupies residues 198–217 (VIFMLGVFALVIPLLLILVS). The Cytoplasmic segment spans residues 218 to 237 (YIRIISAILKIPSSVGRYKT). The helical transmembrane segment at 238 to 258 (FSTCASHLIVVTVHYSCASFI) threads the bilayer. At 259–271 (YLRPKTNYTSSQD) the chain is on the extracellular side. The N-linked (GlcNAc...) asparagine glycan is linked to asparagine 265. A helical transmembrane segment spans residues 272-292 (TLISVSYTILTPLFNPMIYSL). The Cytoplasmic segment spans residues 293 to 313 (RNKEFKSALRRTIGQTFYPLS).

The protein belongs to the G-protein coupled receptor 1 family.

Its subcellular location is the cell membrane. Its function is as follows. Odorant receptor. The polypeptide is Olfactory receptor 10K1 (OR10K1) (Homo sapiens (Human)).